The chain runs to 104 residues: Large ribosomal subunit protein uL24 (104 aa).

Belongs to the universal ribosomal protein uL24 family. As to quaternary structure, part of the 50S ribosomal subunit.

Its function is as follows. One of two assembly initiator proteins, it binds directly to the 5'-end of the 23S rRNA, where it nucleates assembly of the 50S subunit. In terms of biological role, one of the proteins that surrounds the polypeptide exit tunnel on the outside of the subunit. This is Large ribosomal subunit protein uL24 from Clostridium perfringens (strain ATCC 13124 / DSM 756 / JCM 1290 / NCIMB 6125 / NCTC 8237 / Type A).